A 487-amino-acid polypeptide reads, in one-letter code: 2-aminomuconic semialdehyde dehydrogenase (487 aa).

Residue 209 to 215 (GTGPRVG) participates in NAD(+) binding. Glu-253 functions as the Proton acceptor in the catalytic mechanism. Cys-287 functions as the Nucleophile in the catalytic mechanism. Ser-362 bears the Phosphoserine mark.

The protein belongs to the aldehyde dehydrogenase family. Highly expressed in adult kidney and liver. Detected at lower levels in fetal liver and kidney.

It is found in the cytoplasm. It catalyses the reaction 2-aminomuconate 6-semialdehyde + NAD(+) + H2O = (2Z,4E)-2-aminomuconate + NADH + 2 H(+). The protein operates within amino-acid degradation; L-kynurenine degradation. Catalyzes the NAD-dependent oxidation of 2-aminomuconic semialdehyde of the kynurenine metabolic pathway in L-tryptophan degradation. The polypeptide is 2-aminomuconic semialdehyde dehydrogenase (Homo sapiens (Human)).